The chain runs to 529 residues: uncharacterized protein (529 aa).

The 117-residue stretch at 13–129 (QTAMRKMRAL…LSTLCQEAQR (117 aa)) folds into the Arf-GAP domain. Residues 28–51 (CFDCGARNPTWCTVTYGVFLCIDC) form a C4-type zinc finger. Basic and acidic residues predominate over residues 291-301 (QMEAKVAKDPT). 4 disordered regions span residues 291-313 (QMEAKVAKDPTKAASVDRLGMGG), 335-357 (VLTFKKPSQPKEDDDWEVIDDKY), 398-424 (KSRYTASSSSSSTSRAPTTRLTAGASP), and 468-493 (FGSEDLWGNGSQQRQSSQVPDMSDLK). Over residues 399–420 (SRYTASSSSSSTSRAPTTRLTA) the composition is skewed to low complexity. The segment covering 476–487 (NGSQQRQSSQVP) has biased composition (polar residues).

GTPase-activating protein for the ADP ribosylation factor family. This is an uncharacterized protein from Caenorhabditis elegans.